The chain runs to 348 residues: Dual-specificity RNA methyltransferase RlmN (348 aa).

E94 (proton acceptor) is an active-site residue. The 231-residue stretch at 100–330 (GKHNWTACIS…TAIIRASRGR (231 aa)) folds into the Radical SAM core domain. A disulfide bridge links C107 with C336. 3 residues coordinate [4Fe-4S] cluster: C114, C118, and C121. S-adenosyl-L-methionine contacts are provided by residues 163–164 (GE), S195, 217–219 (SLN), and N293. The active-site S-methylcysteine intermediate is the C336.

This sequence belongs to the radical SAM superfamily. RlmN family. It depends on [4Fe-4S] cluster as a cofactor.

It is found in the cytoplasm. It carries out the reaction adenosine(2503) in 23S rRNA + 2 reduced [2Fe-2S]-[ferredoxin] + 2 S-adenosyl-L-methionine = 2-methyladenosine(2503) in 23S rRNA + 5'-deoxyadenosine + L-methionine + 2 oxidized [2Fe-2S]-[ferredoxin] + S-adenosyl-L-homocysteine. The catalysed reaction is adenosine(37) in tRNA + 2 reduced [2Fe-2S]-[ferredoxin] + 2 S-adenosyl-L-methionine = 2-methyladenosine(37) in tRNA + 5'-deoxyadenosine + L-methionine + 2 oxidized [2Fe-2S]-[ferredoxin] + S-adenosyl-L-homocysteine. Its function is as follows. Specifically methylates position 2 of adenine 2503 in 23S rRNA and position 2 of adenine 37 in tRNAs. m2A2503 modification seems to play a crucial role in the proofreading step occurring at the peptidyl transferase center and thus would serve to optimize ribosomal fidelity. The polypeptide is Dual-specificity RNA methyltransferase RlmN (Syntrophus aciditrophicus (strain SB)).